A 492-amino-acid polypeptide reads, in one-letter code: Spore germination protein XA (492 aa).

7 helical membrane passes run 246 to 266 (FILL…FPFF), 285 to 305 (LLSL…VALV), 325 to 345 (EGIP…FELL), 353 to 373 (PAAF…QAAI), 377 to 397 (FVSP…FTLV), 413 to 433 (FLMS…LIVI), and 442 to 462 (GLPF…PSTF).

This sequence belongs to the GerABKA family.

Its subcellular location is the cell membrane. May allow B.anthracis to germinate within phagocytic cells and therefore involved in virulence. The chain is Spore germination protein XA (gerXA) from Bacillus anthracis.